A 605-amino-acid chain; its full sequence is Elongation factor 4 (605 aa).

The tr-type G domain occupies 4 to 186; sequence SSVRNFCIIA…AIVNKVPAPK (183 aa). GTP is bound by residues 16–21 and 133–136; these read DHGKST and NKID.

It belongs to the TRAFAC class translation factor GTPase superfamily. Classic translation factor GTPase family. LepA subfamily.

The protein localises to the cell membrane. It catalyses the reaction GTP + H2O = GDP + phosphate + H(+). Functionally, required for accurate and efficient protein synthesis under certain stress conditions. May act as a fidelity factor of the translation reaction, by catalyzing a one-codon backward translocation of tRNAs on improperly translocated ribosomes. Back-translocation proceeds from a post-translocation (POST) complex to a pre-translocation (PRE) complex, thus giving elongation factor G a second chance to translocate the tRNAs correctly. Binds to ribosomes in a GTP-dependent manner. The protein is Elongation factor 4 of Dehalococcoides mccartyi (strain ATCC BAA-2100 / JCM 16839 / KCTC 5957 / BAV1).